The following is a 257-amino-acid chain: MDFLHHILSTYASFFDWKMWGEVLTDPVSWGLIGSLVVLEGLLSADNALVLAVMVKHLPEKQRKKALTYGLFGAYIFRFIFIGLGMLLIKFWWIKVLGALYLAWLVIKHFWIGEKEEEADGMKKNSWMVRTFGIFWATVISVELMDLAFSVDSILAAFAVSEKVWVLLIGGMLGILMMRTVAKVFLVLIDKIPELENTAFVLIGIIALKMAGSAFHYEMPHSVFFIIIIAAFAVTLIIHYINKQKQVREQTAASKEE.

Helical transmembrane passes span 23 to 43 (VLTD…EGLL), 79 to 99 (FIFI…VLGA), 131 to 151 (TFGI…AFSV), 158 to 178 (FAVS…ILMM), 199 to 219 (AFVL…HYEM), and 221 to 241 (HSVF…IHYI).

Belongs to the TerC family.

It localises to the cell membrane. This is an uncharacterized protein from Bacillus subtilis (strain 168).